A 77-amino-acid polypeptide reads, in one-letter code: UPF0401 protein ECP_3853 (77 aa).

It belongs to the UPF0401 family.

In Escherichia coli O6:K15:H31 (strain 536 / UPEC), this protein is UPF0401 protein ECP_3853.